We begin with the raw amino-acid sequence, 316 residues long: Methionyl-tRNA formyltransferase (316 aa).

Position 112–115 (112–115 (SLLP)) interacts with (6S)-5,6,7,8-tetrahydrofolate.

This sequence belongs to the Fmt family.

The enzyme catalyses L-methionyl-tRNA(fMet) + (6R)-10-formyltetrahydrofolate = N-formyl-L-methionyl-tRNA(fMet) + (6S)-5,6,7,8-tetrahydrofolate + H(+). Attaches a formyl group to the free amino group of methionyl-tRNA(fMet). The formyl group appears to play a dual role in the initiator identity of N-formylmethionyl-tRNA by promoting its recognition by IF2 and preventing the misappropriation of this tRNA by the elongation apparatus. The protein is Methionyl-tRNA formyltransferase of Psychromonas ingrahamii (strain DSM 17664 / CCUG 51855 / 37).